The primary structure comprises 156 residues: Large ribosomal subunit protein uL15 (156 aa).

The tract at residues 25-49 (RGIGCGKGKTSGRGHKGQKARSGTS) is disordered. Basic residues predominate over residues 34–43 (TSGRGHKGQK).

It belongs to the universal ribosomal protein uL15 family. As to quaternary structure, part of the 50S ribosomal subunit.

Its function is as follows. Binds to the 23S rRNA. This chain is Large ribosomal subunit protein uL15, found in Wolbachia sp. subsp. Brugia malayi (strain TRS).